The chain runs to 149 residues: Putative pre-16S rRNA nuclease (149 aa).

The protein belongs to the YqgF nuclease family.

The protein resides in the cytoplasm. Its function is as follows. Could be a nuclease involved in processing of the 5'-end of pre-16S rRNA. This Burkholderia vietnamiensis (strain G4 / LMG 22486) (Burkholderia cepacia (strain R1808)) protein is Putative pre-16S rRNA nuclease.